The sequence spans 340 residues: Polyporopepsin (340 aa).

In terms of domain architecture, Peptidase A1 spans 14–330 (YVVNVGVGSP…DTTNKRLGLA (317 aa)). Residue aspartate 32 is part of the active site. Residue asparagine 192 is glycosylated (N-linked (GlcNAc...) asparagine). Aspartate 212 is an active-site residue. Asparagine 238 carries an N-linked (GlcNAc...) asparagine glycan.

Belongs to the peptidase A1 family.

It catalyses the reaction Milk clotting activity, broad specificity, but fails to cleave 15-Leu-|-Tyr-16 or 16-Tyr-|-Leu-17 of insulin B chain.. This is Polyporopepsin from Irpex lacteus (Milk-white toothed polypore).